Consider the following 539-residue polypeptide: Probable malate:quinone oxidoreductase (539 aa).

It belongs to the MQO family. FAD serves as cofactor.

The enzyme catalyses (S)-malate + a quinone = a quinol + oxaloacetate. The protein operates within carbohydrate metabolism; tricarboxylic acid cycle; oxaloacetate from (S)-malate (quinone route): step 1/1. The chain is Probable malate:quinone oxidoreductase from Sodalis glossinidius (strain morsitans).